A 195-amino-acid polypeptide reads, in one-letter code: Cysteine/O-acetylserine efflux protein (195 aa).

Residues 1–9 lie on the Periplasmic side of the membrane; that stretch reads MTPMLLSAF. Residues 10–32 form a helical membrane-spanning segment; that stretch reads WTYTLITALTPGPNNILALSAAT. At 33-46 the chain is on the cytoplasmic side; the sequence is AHGFRQSIRVLAGM. Residues 47 to 67 form a helical membrane-spanning segment; the sequence is SLGFLVVMLLCAGIAFSLAVI. The Periplasmic segment spans residues 68–69; sequence DP. Residues 70-90 traverse the membrane as a helical segment; sequence AIIHLLSWVGAAYILWLAWKI. The Cytoplasmic segment spans residues 91-104; sequence ATSPAADENARPKP. A helical membrane pass occupies residues 105-125; the sequence is VGFWVSFGLQFVNVKIILYGI. At 126 to 141 the chain is on the periplasmic side; it reads TALSTFVLPQTQALNW. Residues 142-162 form a helical membrane-spanning segment; it reads VIGVSILLALIGTFGNVCWAL. Topologically, residues 163-176 are cytoplasmic; sequence AGHLFQRAFRHYGR. Residues 177 to 194 traverse the membrane as a helical segment; it reads QLNIILALLLVYCAVRIF. Position 195 (Y195) is a topological domain, periplasmic.

It belongs to the Rht family.

Its subcellular location is the cell inner membrane. The enzyme catalyses O-acetyl-L-serine(in) = O-acetyl-L-serine(out). It catalyses the reaction L-cysteine(in) = L-cysteine(out). In terms of biological role, exporter of O-acetylserine (OAS) and cysteine. This Salmonella choleraesuis (strain SC-B67) protein is Cysteine/O-acetylserine efflux protein (eamB).